The chain runs to 251 residues: Triosephosphate isomerase (251 aa).

Position 8–10 (8–10 (NWK)) interacts with substrate. Catalysis depends on His97, which acts as the Electrophile. Residue Glu170 is the Proton acceptor of the active site. Residues Gly176, Ser215, and 236 to 237 (GG) each bind substrate.

This sequence belongs to the triosephosphate isomerase family. Homodimer.

The protein localises to the cytoplasm. The catalysed reaction is D-glyceraldehyde 3-phosphate = dihydroxyacetone phosphate. It functions in the pathway carbohydrate biosynthesis; gluconeogenesis. Its pathway is carbohydrate degradation; glycolysis; D-glyceraldehyde 3-phosphate from glycerone phosphate: step 1/1. Involved in the gluconeogenesis. Catalyzes stereospecifically the conversion of dihydroxyacetone phosphate (DHAP) to D-glyceraldehyde-3-phosphate (G3P). The chain is Triosephosphate isomerase from Nitratidesulfovibrio vulgaris (strain ATCC 29579 / DSM 644 / CCUG 34227 / NCIMB 8303 / VKM B-1760 / Hildenborough) (Desulfovibrio vulgaris).